A 389-amino-acid chain; its full sequence is Curcumin synthase 1 (389 aa).

Cys-164 is a catalytic residue.

The protein belongs to the thiolase-like superfamily. Chalcone/stilbene synthases family. As to quaternary structure, homodimer. Expressed in both the leaf and rhizome, with higher expression in the rhizome.

It catalyses the reaction (E)-feruloylacetyl-CoA + (E)-feruloyl-CoA + H2O = curcumin + CO2 + 2 CoA. It functions in the pathway secondary metabolite biosynthesis; flavonoid biosynthesis. Catalyzes the synthesis of curcumin by condensing feruloyl-CoA with a diketide-CoA in the curcuminoid biosynthesis. The polypeptide is Curcumin synthase 1 (CURS1) (Curcuma longa (Turmeric)).